The following is a 254-amino-acid chain: Large ribosomal subunit protein uL2 (254 aa).

This sequence belongs to the universal ribosomal protein uL2 family.

This Eremothecium gossypii (strain ATCC 10895 / CBS 109.51 / FGSC 9923 / NRRL Y-1056) (Yeast) protein is Large ribosomal subunit protein uL2 (RPL2).